A 176-amino-acid polypeptide reads, in one-letter code: Small capsomere-interacting protein (176 aa).

2 disordered regions span residues D75–G109 and A148–Q176. Low complexity predominate over residues A80–G109.

This sequence belongs to the herpesviridae small capsomere-interacting protein family. Interacts with the major capsid protein/MCP.

The protein localises to the virion. Its subcellular location is the host nucleus. Participates in the assembly of the infectious particles by decorating the outer surface of the capsid shell and thus forming a layer between the capsid and the tegument. Complexes composed of the major capsid protein and small capsomere-interacting protein/SCP assemble together in the host cytoplasm and are translocated to the nucleus, where they accumulate and participate in capsid assembly. This Epstein-Barr virus (strain B95-8) (HHV-4) protein is Small capsomere-interacting protein.